Here is a 226-residue protein sequence, read N- to C-terminus: E3 ubiquitin-protein ligase RNF186 (226 aa).

The RING-type zinc-finger motif lies at cysteine 39–arginine 85. A disordered region spans residues glycine 121–alanine 143. The next 2 membrane-spanning stretches (helical) occupy residues histidine 157–isoleucine 177 and tryptophan 179–proline 199.

Interacts with BNIP1. In terms of processing, polyubiquitinated. 'Lys-29' autoubiquitination leads to proteasomal degradation.

Its subcellular location is the endoplasmic reticulum membrane. It catalyses the reaction S-ubiquitinyl-[E2 ubiquitin-conjugating enzyme]-L-cysteine + [acceptor protein]-L-lysine = [E2 ubiquitin-conjugating enzyme]-L-cysteine + N(6)-ubiquitinyl-[acceptor protein]-L-lysine.. Its pathway is protein modification; protein ubiquitination. Its function is as follows. E3 ubiquitin protein ligase that is part of an apoptotic signaling pathway activated by endoplasmic reticulum stress. Stimulates the expression of proteins specific of the unfolded protein response (UPR), ubiquitinates BNIP1 and regulates its localization to the mitochondrion and induces calcium release from the endoplasmic reticulum that ultimately leads to cell apoptosis. Plays a role in the maintenance of intestinal homeostasis and clearance of enteric pathogens. Upon NOD2 stimulation, ubiquitinates the ER stress sensor activating transcription factor 6/ATF6 and promotes the unfolded protein response UPR. Participates in basal level of autophagy maintenance by regulating the ubiquitination of EPHB2. Upon stimulation by ligand EFNB1, ubiquitinates EPHB2 and further recruits MAP1LC3B for autophagy induction. Controls nutrient sensing by ubiquitinating Sestrin-2/SESN2, which is an intracellular sensor of cytosolic leucine and inhibitor of mTORC1 activity. This chain is E3 ubiquitin-protein ligase RNF186, found in Bos taurus (Bovine).